The primary structure comprises 432 residues: Gamma-glutamyl phosphate reductase (432 aa).

It belongs to the gamma-glutamyl phosphate reductase family.

The protein localises to the cytoplasm. It carries out the reaction L-glutamate 5-semialdehyde + phosphate + NADP(+) = L-glutamyl 5-phosphate + NADPH + H(+). It participates in amino-acid biosynthesis; L-proline biosynthesis; L-glutamate 5-semialdehyde from L-glutamate: step 2/2. In terms of biological role, catalyzes the NADPH-dependent reduction of L-glutamate 5-phosphate into L-glutamate 5-semialdehyde and phosphate. The product spontaneously undergoes cyclization to form 1-pyrroline-5-carboxylate. The protein is Gamma-glutamyl phosphate reductase of Brachyspira hyodysenteriae (strain ATCC 49526 / WA1).